We begin with the raw amino-acid sequence, 141 residues long: Protein C19orf12 homolog (141 aa).

The helical transmembrane segment at 33–53 threads the bilayer; the sequence is LVAAAGAFLGGLVGGPPGIAV.

Belongs to the C19orf12 family.

It is found in the mitochondrion. Its subcellular location is the mitochondrion membrane. The protein resides in the endoplasmic reticulum. It localises to the cytoplasm. The protein localises to the cytosol. This is Protein C19orf12 homolog from Xenopus tropicalis (Western clawed frog).